Consider the following 216-residue polypeptide: MTSSSCPRASLNYRPAMKASDVDPDAEYAVPLEHFDVEVSPYTVFERGGTCVRVSGRRLACLLRNGSRGESAPAPAAAAASAGQPGRKRSCKNVCFKGATSRRELERTLTARVNLPPCMTGLLRQFEIRNRGDRYRKRFVFNCYLINTTTCTACDRRCFVNAAAVLYERDEKCVREMMSLLRREDCYKPPNCSKMSQESLCFKSGACRGTNPLCNF.

The disordered stretch occupies residues 67-88 (SRGESAPAPAAAAASAGQPGRK). Low complexity predominate over residues 71 to 82 (SAPAPAAAAASA).

Belongs to the baculoviridae LEF-2 family.

In terms of biological role, required for late and very late gene expression. Specifically required for expression from the vp39 and polh promoters. This is Late expression factor 2 (LEF-2) from Lepidoptera (butterflies and moths).